A 771-amino-acid chain; its full sequence is MATLGDIGVAAAINILTAIIFLLAFAILRIQPFNDRVYFPKWYLKGIRSSPLHSGALVSKFVNVNLGSYLRFLNWMPAALKMPEPELIDHAGLDSAVYLRIYLIGLKIFVPIALLAWSILVPVNWTSHGLQLAKLRNVTSSDIDKLSISNIENGSDRFWTHLVMAYAFTFWTCYVLMKEYEKVAAMRLAFLQNEQRRPDQFTVLVRNVPADPDESISDSVEHFFLVNHPDHYLTHQVVYNANDLAALVEQKKSTQNWLDYYQLKYTRNQEHKPRIKTGFLGLWGKKVDAIDHYIAEIEKLNEQIMEERKKVKKDDTSVMPAAFVSFKTRWGAAVSAQTQQSSDPTEWLTEWAPEAREVFWSNLAIPYVSLTVRRLIMHIAFFFLTFFFMIPIAFVQSLASIEGIEKNAPFLKSIIENDLFKSVIQGFLPGIVLKLFLIFLPSILMVMSKFEGFVSLSSLERRAAFRYYIFNLINVFLGSVITGSAFEQLDSFLKQSAKEIPKTVGVAIPIKATFFITYIMVDGWAGIAGEILRLKPLIFFHIKNSLLVKTEKDREEAMNPGQINYHATEPRIQLYFLLGLVYAPVTPVLLPFIIIFFALAYLVFRHQIINVYNQEYESAARFWPDVHGRIISALIIAQILLMGLLSTKGAAQSTPFLLFLPIITFFFHRYCKGRYEPAFLRHPLKEAMVKDTLERAREPNFNLKPYLQKAYIHPVFKDNDYEDSRFDEISGYCIEDSDEECVTVPTKRQSRINTPAVSHASRGSSRSPPSK.

A helical transmembrane segment spans residues 7-27 (IGVAAAINILTAIIFLLAFAI). The residue at position 54 (Ser54) is a Phosphoserine. 9 consecutive transmembrane segments (helical) span residues 101–121 (IYLI…SILV), 158–178 (FWTH…VLMK), 375–395 (LIMH…IAFV), 427–447 (FLPG…LMVM), 467–487 (YYIF…SAFE), 512–532 (ATFF…GEIL), 584–604 (PVTP…YLVF), 630–650 (IISA…TKGA), and 651–671 (AQST…HRYC). Residues 744 to 771 (VPTKRQSRINTPAVSHASRGSSRSPPSK) form a disordered region. Polar residues predominate over residues 751–771 (RINTPAVSHASRGSSRSPPSK).

The protein belongs to the CSC1 (TC 1.A.17) family. Post-translationally, phosphorylated at Ser-54 by BIK1 in response to pathogen-associated molecular pattern (PAMP) perception, promoting its activation. As to expression, preferentially expressed in guard cells.

Its subcellular location is the cell membrane. It carries out the reaction Ca(2+)(in) = Ca(2+)(out). With respect to regulation, activated following phosphorylation at Ser-54 by BIK1. Its function is as follows. Calcium-permeable channel that plays a key role in plant stomatal immunity. In response to pathogen-associated molecular pattern (PAMP) perception, phosphorylated and activated by BIK1, triggering rapid influx of calcium ions across the plasma membrane, leading to stomatal closure. This chain is Hyperosmolality-gated Ca2+ permeable channel 1.3, found in Arabidopsis thaliana (Mouse-ear cress).